The chain runs to 386 residues: Protein phosphatase methylesterase 1 (386 aa).

A disordered region spans residues 20-48; it reads ILEKLKGGQEPNSNEEGSDSIGDLPSLKN. Residues S194, D222, and H348 contribute to the active site.

Belongs to the AB hydrolase superfamily.

It catalyses the reaction [phosphatase 2A protein]-C-terminal L-leucine methyl ester + H2O = [phosphatase 2A protein]-C-terminal L-leucine + methanol + H(+). In terms of biological role, demethylates proteins that have been reversibly carboxymethylated. Demethylates the phosphatase PP2A catalytic subunit. The protein is Protein phosphatase methylesterase 1 (PPE1) of Candida glabrata (strain ATCC 2001 / BCRC 20586 / JCM 3761 / NBRC 0622 / NRRL Y-65 / CBS 138) (Yeast).